We begin with the raw amino-acid sequence, 652 residues long: DNA ligase (652 aa).

NAD(+) is bound by residues 29–33 (DSEYD), 78–79 (SL), and glutamate 107. Lysine 109 functions as the N6-AMP-lysine intermediate in the catalytic mechanism. The NAD(+) site is built by arginine 130, glutamate 164, lysine 278, and lysine 302. Positions 395, 398, 413, and 418 each coordinate Zn(2+). In terms of domain architecture, BRCT spans 577-652 (VADAALSGLT…VRDEAWLESL (76 aa)).

This sequence belongs to the NAD-dependent DNA ligase family. LigA subfamily. It depends on Mg(2+) as a cofactor. Requires Mn(2+) as cofactor.

The catalysed reaction is NAD(+) + (deoxyribonucleotide)n-3'-hydroxyl + 5'-phospho-(deoxyribonucleotide)m = (deoxyribonucleotide)n+m + AMP + beta-nicotinamide D-nucleotide.. DNA ligase that catalyzes the formation of phosphodiester linkages between 5'-phosphoryl and 3'-hydroxyl groups in double-stranded DNA using NAD as a coenzyme and as the energy source for the reaction. It is essential for DNA replication and repair of damaged DNA. The chain is DNA ligase from Streptococcus pneumoniae (strain CGSP14).